The primary structure comprises 215 residues: MSEKNPIVGLCQKASFLISAAQVDQCPPDEGLEVAFAGRSNAGKSSALNTLTHANLARTSKTPGRTQLLNFFALDDSRRLVDLPGYGYAKVPIPLKQHWQRHLEAYLSSRASLAGVFLMMDIRHPLTDFDRLMLDWAQASQLPIHVLMTKADKLAFGAAKNALLKVRREVQQGWGDVATLQLFSAPKRQGVDEAQMVLAQWLGLLDEEQEAFEEA.

Positions 30–204 (EGLEVAFAGR…QMVLAQWLGL (175 aa)) constitute an EngB-type G domain. GTP-binding positions include 38–45 (GRSNAGKS), 64–68 (GRTQL), 82–85 (DLPG), 149–152 (TKAD), and 182–185 (LFSA). Mg(2+) contacts are provided by Ser45 and Thr66.

This sequence belongs to the TRAFAC class TrmE-Era-EngA-EngB-Septin-like GTPase superfamily. EngB GTPase family. It depends on Mg(2+) as a cofactor.

In terms of biological role, necessary for normal cell division and for the maintenance of normal septation. The sequence is that of Probable GTP-binding protein EngB from Pseudomonas aeruginosa (strain ATCC 15692 / DSM 22644 / CIP 104116 / JCM 14847 / LMG 12228 / 1C / PRS 101 / PAO1).